The following is a 72-amino-acid chain: Beta-defensin 104A (72 aa).

A signal peptide spans 1–22 (MRRLVLLLAISLLLYQDLPVRS). Intrachain disulfides connect Cys-30–Cys-57, Cys-37–Cys-51, and Cys-41–Cys-58.

Belongs to the beta-defensin family.

It localises to the secreted. Functionally, has antimicrobial activity. This is Beta-defensin 104A (DEFB104A) from Gorilla gorilla gorilla (Western lowland gorilla).